Here is a 126-residue protein sequence, read N- to C-terminus: uncharacterized protein (126 aa).

Residues 5 to 25 (LIQHITSIFVFSFFFLFFFFS) traverse the membrane as a helical segment.

The protein localises to the membrane. This is an uncharacterized protein from Saccharomyces cerevisiae (strain ATCC 204508 / S288c) (Baker's yeast).